Here is a 117-residue protein sequence, read N- to C-terminus: Ig heavy chain V region MOPC 47A (117 aa).

Residues 1 to 113 (EVKLVESGGG…FAYWGZGTLV (113 aa)) form the Ig-like domain.

The sequence is that of Ig heavy chain V region MOPC 47A from Mus musculus (Mouse).